We begin with the raw amino-acid sequence, 143 residues long: Hemoglobin subunit alpha-A (143 aa).

Positions 2 to 143 constitute a Globin domain; it reads SLSGKDKSVV…LALALAERYR (142 aa). H60 provides a ligand contact to O2. Residue H89 coordinates heme b.

It belongs to the globin family. In terms of assembly, heterotetramer of two alpha chains and two beta chains. In terms of tissue distribution, red blood cells.

Involved in oxygen transport from gills to the various peripheral tissues. This chain is Hemoglobin subunit alpha-A (hbaa), found in Seriola quinqueradiata (Five-ray yellowtail).